The following is a 200-amino-acid chain: Inner membrane-spanning protein YciB (200 aa).

A run of 6 helical transmembrane segments spans residues 1–21 (MPPLLKLALELGPLLVFFFAN), 37–57 (IGAPIFLATALFMAATVIALA), 66–86 (LPIMPLVSGIVVLVFGALTLW), 103–123 (LFGGILLGGLFFGKSLLGYVF), 136–156 (KLTLRWGLFFIFLAIVNEIVW), and 167–187 (FKVWGIMPITIVFTLLQMPLI).

The protein belongs to the YciB family.

It localises to the cell inner membrane. Plays a role in cell envelope biogenesis, maintenance of cell envelope integrity and membrane homeostasis. This Brucella suis biovar 1 (strain 1330) protein is Inner membrane-spanning protein YciB.